Reading from the N-terminus, the 273-residue chain is Glutamate racemase (273 aa).

Substrate is bound by residues 19–20 (DS) and 51–52 (YG). Cysteine 83 (proton donor/acceptor) is an active-site residue. Position 84–85 (84–85 (NT)) interacts with substrate. Cysteine 198 serves as the catalytic Proton donor/acceptor. Position 199–200 (199–200 (TH)) interacts with substrate.

The protein belongs to the aspartate/glutamate racemases family.

It carries out the reaction L-glutamate = D-glutamate. It participates in cell wall biogenesis; peptidoglycan biosynthesis. Provides the (R)-glutamate required for cell wall biosynthesis. The sequence is that of Glutamate racemase from Agrobacterium fabrum (strain C58 / ATCC 33970) (Agrobacterium tumefaciens (strain C58)).